We begin with the raw amino-acid sequence, 228 residues long: Isoprenyl transferase (228 aa).

The active site involves D9. A Mg(2+)-binding site is contributed by D9. Substrate contacts are provided by residues G10–R13, W14, R22, H26, and S54–E56. Catalysis depends on N57, which acts as the Proton acceptor. Residues W58, R60, R175, and R181–S183 contribute to the substrate site. Residue E194 coordinates Mg(2+).

This sequence belongs to the UPP synthase family. In terms of assembly, homodimer. It depends on Mg(2+) as a cofactor.

In terms of biological role, catalyzes the condensation of isopentenyl diphosphate (IPP) with allylic pyrophosphates generating different type of terpenoids. The sequence is that of Isoprenyl transferase from Treponema pallidum (strain Nichols).